Here is a 289-residue protein sequence, read N- to C-terminus: Phosphatidylserine decarboxylase proenzyme (289 aa).

Catalysis depends on charge relay system; for autoendoproteolytic cleavage activity residues Asp88, His145, and Ser251. Ser251 acts as the Schiff-base intermediate with substrate; via pyruvic acid; for decarboxylase activity in catalysis. Pyruvic acid (Ser); by autocatalysis is present on Ser251.

The protein belongs to the phosphatidylserine decarboxylase family. PSD-B subfamily. Prokaryotic type I sub-subfamily. Heterodimer of a large membrane-associated beta subunit and a small pyruvoyl-containing alpha subunit. Pyruvate is required as a cofactor. Post-translationally, is synthesized initially as an inactive proenzyme. Formation of the active enzyme involves a self-maturation process in which the active site pyruvoyl group is generated from an internal serine residue via an autocatalytic post-translational modification. Two non-identical subunits are generated from the proenzyme in this reaction, and the pyruvate is formed at the N-terminus of the alpha chain, which is derived from the carboxyl end of the proenzyme. The autoendoproteolytic cleavage occurs by a canonical serine protease mechanism, in which the side chain hydroxyl group of the serine supplies its oxygen atom to form the C-terminus of the beta chain, while the remainder of the serine residue undergoes an oxidative deamination to produce ammonia and the pyruvoyl prosthetic group on the alpha chain. During this reaction, the Ser that is part of the protease active site of the proenzyme becomes the pyruvoyl prosthetic group, which constitutes an essential element of the active site of the mature decarboxylase.

The protein resides in the cell membrane. The enzyme catalyses a 1,2-diacyl-sn-glycero-3-phospho-L-serine + H(+) = a 1,2-diacyl-sn-glycero-3-phosphoethanolamine + CO2. It participates in phospholipid metabolism; phosphatidylethanolamine biosynthesis; phosphatidylethanolamine from CDP-diacylglycerol: step 2/2. In terms of biological role, catalyzes the formation of phosphatidylethanolamine (PtdEtn) from phosphatidylserine (PtdSer). This Polaromonas naphthalenivorans (strain CJ2) protein is Phosphatidylserine decarboxylase proenzyme.